The primary structure comprises 364 residues: GDP-fucose transporter 1 (364 aa).

A run of 8 helical transmembrane segments spans residues 34–56, 76–98, 111–130, 140–162, 167–185, 195–214, 227–249, and 264–286; these read FVLRALQIALVVSLYWVTSISMV, VTFYQCLVTVLLCKGLSSLATCC, LKVARSVLPLSVVFIGMITF, VAFYNVGRSLTTVFNVLLSYLLL, SFYALLTCSVIIGGFWLGV, SWTGTLFGVLASLCVSLNAI, IWRLTFYNNANACVLFLPLLLAL, and AHFWAMMTLGGLFGFAIGYVTGL. The interval 345-364 is disordered; it reads MKKTQEEPHPRENEKSNMEV.

This sequence belongs to the TPT transporter family. SLC35C subfamily.

Its subcellular location is the golgi apparatus membrane. The enzyme catalyses GMP(out) + GDP-beta-L-fucose(in) = GMP(in) + GDP-beta-L-fucose(out). In terms of biological role, antiporter specific for GDP-l-fucose and depending on the concomitant reverse transport of GMP. Involved in GDP-fucose import from the cytoplasm into the Golgi lumen. The polypeptide is GDP-fucose transporter 1 (SLC35C1) (Bos taurus (Bovine)).